The chain runs to 434 residues: Histidinol dehydrogenase (434 aa).

Positions 130, 188, and 211 each coordinate NAD(+). Serine 237, glutamine 259, and histidine 262 together coordinate substrate. 2 residues coordinate Zn(2+): glutamine 259 and histidine 262. Active-site proton acceptor residues include glutamate 326 and histidine 327. Substrate is bound by residues histidine 327, aspartate 360, glutamate 414, and histidine 419. Aspartate 360 is a Zn(2+) binding site. Histidine 419 contacts Zn(2+).

Belongs to the histidinol dehydrogenase family. In terms of assembly, homodimer. The cofactor is Zn(2+).

It carries out the reaction L-histidinol + 2 NAD(+) + H2O = L-histidine + 2 NADH + 3 H(+). The protein operates within amino-acid biosynthesis; L-histidine biosynthesis; L-histidine from 5-phospho-alpha-D-ribose 1-diphosphate: step 9/9. In terms of biological role, catalyzes the sequential NAD-dependent oxidations of L-histidinol to L-histidinaldehyde and then to L-histidine. This is Histidinol dehydrogenase from Escherichia coli O6:H1 (strain CFT073 / ATCC 700928 / UPEC).